Here is a 1082-residue protein sequence, read N- to C-terminus: RhoGEF domain-containing protein gxcI (1082 aa).

Positions 1-15 are enriched in polar residues; sequence MRKNSTSNPSPSHQF. 5 disordered regions span residues 1–29, 59–78, 91–394, 438–488, and 504–524; these read MRKN…VNNN, DKNQ…VLPQ, YNEQ…VTSL, KQAS…SVSN, and INSF…SLSL. 5 stretches are compositionally biased toward low complexity: residues 20-29, 62-71, 96-109, 116-160, and 170-184; these read KNTTTVVNNN, QQQQQQQQQQ, PSSS…SSSP, LLST…SGSP, and PTIL…RQLP. A compositionally biased stretch (pro residues) spans 185-206; sequence TRPPSPLPKLPSRPTSPVPPNP. Residues 211-244 show a composition bias toward low complexity; that stretch reads NTTTTNNNNNNNNNNNNNNNNNNNNNNNNNNNNN. Residues 262–276 are compositionally biased toward pro residues; it reads PIPPPNDKPAPPPRP. Residues 282-366 show a composition bias toward low complexity; that stretch reads TLTTPPTIAT…NNNNNSNNNK (85 aa). A compositionally biased stretch (pro residues) spans 367–379; it reads PLPPTSTKPPRPK. Residues 450–473 show a composition bias toward low complexity; that stretch reads SSLSLSTTPTSVSPSTPSSANPTP. Residues 622 to 817 enclose the DH domain; it reads SFNKVIKEII…EKIVNDINGK (196 aa). The interval 838 to 994 is PH-like; sequence QQLRDQTFLK…NDIDEAINIL (157 aa). Disordered regions lie at residues 920–961 and 1017–1060; these read NNNN…NSTP and NNNN…NSNN.

In terms of biological role, GTPase-activating protein. This chain is RhoGEF domain-containing protein gxcI (gxcI), found in Dictyostelium discoideum (Social amoeba).